A 336-amino-acid chain; its full sequence is 3-isopropylmalate dehydrogenase (336 aa).

Residues R87, R97, R121, and D211 each coordinate substrate. 3 residues coordinate Mg(2+): D211, D235, and D239. 271-283 contacts NAD(+); that stretch reads GSAPDIAGQGIAD.

This sequence belongs to the isocitrate and isopropylmalate dehydrogenases family. LeuB type 2 subfamily. In terms of assembly, homodimer. Mg(2+) serves as cofactor. The cofactor is Mn(2+).

The protein localises to the cytoplasm. The enzyme catalyses (2R,3S)-3-isopropylmalate + NAD(+) = 4-methyl-2-oxopentanoate + CO2 + NADH. It functions in the pathway amino-acid biosynthesis; L-leucine biosynthesis; L-leucine from 3-methyl-2-oxobutanoate: step 3/4. Catalyzes the oxidation of 3-carboxy-2-hydroxy-4-methylpentanoate (3-isopropylmalate) to 3-carboxy-4-methyl-2-oxopentanoate. The product decarboxylates to 4-methyl-2 oxopentanoate. This Rhodococcus opacus (strain B4) protein is 3-isopropylmalate dehydrogenase.